A 268-amino-acid polypeptide reads, in one-letter code: Undecaprenyl-diphosphatase (268 aa).

Transmembrane regions (helical) follow at residues 4 to 24, 50 to 70, 84 to 104, 109 to 129, 144 to 164, 184 to 204, 214 to 234, and 245 to 265; these read STTL…FIPV, IQLG…ISVI, AAVL…HGFI, FETP…LLFV, VPLG…VPGV, AAEF…AFDL, GALG…VLVV, and GYSL…AALL.

The protein belongs to the UppP family.

It localises to the cell inner membrane. It carries out the reaction di-trans,octa-cis-undecaprenyl diphosphate + H2O = di-trans,octa-cis-undecaprenyl phosphate + phosphate + H(+). In terms of biological role, catalyzes the dephosphorylation of undecaprenyl diphosphate (UPP). Confers resistance to bacitracin. This Cereibacter sphaeroides (strain ATCC 17025 / ATH 2.4.3) (Rhodobacter sphaeroides) protein is Undecaprenyl-diphosphatase.